Here is a 382-residue protein sequence, read N- to C-terminus: Mannitol-1-phosphate 5-dehydrogenase (382 aa).

3-14 (VLHFGAGNIGRG) provides a ligand contact to NAD(+).

The protein belongs to the mannitol dehydrogenase family.

The catalysed reaction is D-mannitol 1-phosphate + NAD(+) = beta-D-fructose 6-phosphate + NADH + H(+). The polypeptide is Mannitol-1-phosphate 5-dehydrogenase (Sodalis glossinidius (strain morsitans)).